We begin with the raw amino-acid sequence, 309 residues long: Nudix hydrolase 14, chloroplastic (309 aa).

Residues 1-60 constitute a chloroplast transit peptide; the sequence is MAGFTLLPSRLLAFPSRALPRRLHHHHAKLILRCKMSSSSSSLTQSITLPSQPNEPVLVS. A Nudix hydrolase domain is found at 139-292; it reads ARGPAVAVLI…KVLMSIGLYE (154 aa). Positions 179 to 200 match the Nudix box motif; sequence MLDDDKGDFVGTAVREVEEEIG. 2 residues coordinate Mg(2+): Glu-194 and Glu-198.

This sequence belongs to the Nudix hydrolase family. Homodimer. Mg(2+) is required as a cofactor. Mn(2+) serves as cofactor. Expressed in roots, leaves, stems and inflorescences.

The protein localises to the plastid. Its subcellular location is the chloroplast. It catalyses the reaction ADP-sugar + H2O = AMP + alpha-D-aldose 1-phosphate.. Its function is as follows. Mediates the hydrolysis of some nucleoside diphosphate derivatives. Can use ADP-glucose, ADP-mannose and ADP-ribose as substrates. Regulates the intracellular ADP-glucose levels linked to starch biosynthesis. The polypeptide is Nudix hydrolase 14, chloroplastic (NUDT14) (Arabidopsis thaliana (Mouse-ear cress)).